The primary structure comprises 256 residues: uncharacterized protein (256 aa).

The N-terminal stretch at 1-22 (MGYLKRIGMCISLLIVIIFVTS) is a signal peptide. The N-palmitoyl cysteine moiety is linked to residue Cys-23. Cys-23 carries S-diacylglycerol cysteine lipidation.

This sequence belongs to the staphylococcal tandem lipoprotein family.

Its subcellular location is the cell membrane. This is an uncharacterized protein from Staphylococcus aureus (strain MSSA476).